A 506-amino-acid chain; its full sequence is Maturase K (506 aa).

It belongs to the intron maturase 2 family. MatK subfamily.

The protein localises to the plastid. It localises to the chloroplast. In terms of biological role, usually encoded in the trnK tRNA gene intron. Probably assists in splicing its own and other chloroplast group II introns. This Rhododendron tsusiophyllum (Rhododendron) protein is Maturase K.